Consider the following 127-residue polypeptide: Small ribosomal subunit protein uS13 (127 aa).

The segment at 95–127 (GLPVHGQRTSTNARTRKGPRRAAVKKKGGAKKK) is disordered. The segment covering 108–127 (RTRKGPRRAAVKKKGGAKKK) has biased composition (basic residues).

The protein belongs to the universal ribosomal protein uS13 family. In terms of assembly, part of the 30S ribosomal subunit. Forms a loose heterodimer with protein S19. Forms two bridges to the 50S subunit in the 70S ribosome.

Its function is as follows. Located at the top of the head of the 30S subunit, it contacts several helices of the 16S rRNA. In the 70S ribosome it contacts the 23S rRNA (bridge B1a) and protein L5 of the 50S subunit (bridge B1b), connecting the 2 subunits; these bridges are implicated in subunit movement. Contacts the tRNAs in the A and P-sites. This chain is Small ribosomal subunit protein uS13, found in Desulfatibacillum aliphaticivorans.